The primary structure comprises 561 residues: Lanosterol 14-alpha demethylase (561 aa).

Cys501 contributes to the heme binding site.

The protein belongs to the cytochrome P450 family. It depends on heme as a cofactor.

Its subcellular location is the membrane. The enzyme catalyses a 14alpha-methyl steroid + 3 reduced [NADPH--hemoprotein reductase] + 3 O2 = a Delta(14) steroid + formate + 3 oxidized [NADPH--hemoprotein reductase] + 4 H2O + 4 H(+). The catalysed reaction is a 14alpha-methyl steroid + reduced [NADPH--hemoprotein reductase] + O2 = a 14alpha-hydroxymethyl steroid + oxidized [NADPH--hemoprotein reductase] + H2O + H(+). It carries out the reaction a 14alpha-hydroxymethyl steroid + reduced [NADPH--hemoprotein reductase] + O2 = a 14alpha-formyl steroid + oxidized [NADPH--hemoprotein reductase] + 2 H2O + H(+). It catalyses the reaction a 14alpha-formyl steroid + reduced [NADPH--hemoprotein reductase] + O2 = a Delta(14) steroid + formate + oxidized [NADPH--hemoprotein reductase] + H2O + 2 H(+). The enzyme catalyses lanosterol + 3 reduced [NADPH--hemoprotein reductase] + 3 O2 = 4,4-dimethyl-5alpha-cholesta-8,14,24-trien-3beta-ol + formate + 3 oxidized [NADPH--hemoprotein reductase] + 4 H2O + 4 H(+). The catalysed reaction is lanosterol + reduced [NADPH--hemoprotein reductase] + O2 = 32-hydroxylanosterol + oxidized [NADPH--hemoprotein reductase] + H2O + H(+). It carries out the reaction 32-hydroxylanosterol + reduced [NADPH--hemoprotein reductase] + O2 = 32-oxolanosterol + oxidized [NADPH--hemoprotein reductase] + 2 H2O + H(+). It catalyses the reaction 32-oxolanosterol + reduced [NADPH--hemoprotein reductase] + O2 = 4,4-dimethyl-5alpha-cholesta-8,14,24-trien-3beta-ol + formate + oxidized [NADPH--hemoprotein reductase] + H2O + 2 H(+). The enzyme catalyses eburicol + 3 reduced [NADPH--hemoprotein reductase] + 3 O2 = 14-demethyleburicol + formate + 3 oxidized [NADPH--hemoprotein reductase] + 4 H2O + 4 H(+). The catalysed reaction is eburicol + reduced [NADPH--hemoprotein reductase] + O2 = 32-hydroxyeburicol + oxidized [NADPH--hemoprotein reductase] + H2O + H(+). It carries out the reaction 32-hydroxyeburicol + reduced [NADPH--hemoprotein reductase] + O2 = 32-oxoeburicol + oxidized [NADPH--hemoprotein reductase] + 2 H2O + H(+). It catalyses the reaction 32-oxoeburicol + reduced [NADPH--hemoprotein reductase] + O2 = 14-demethyleburicol + formate + oxidized [NADPH--hemoprotein reductase] + H2O + 2 H(+). It participates in steroid biosynthesis; zymosterol biosynthesis; zymosterol from lanosterol: step 1/6. Sterol 14alpha-demethylase that plays a critical role in the third module of ergosterol biosynthesis pathway, being ergosterol the major sterol component in fungal membranes that participates in a variety of functions. The third module or late pathway involves the ergosterol synthesis itself through consecutive reactions that mainly occur in the endoplasmic reticulum (ER) membrane. In filamentous fungi, during the initial step of this module, lanosterol (lanosta-8,24-dien-3beta-ol) can be metabolized to eburicol. Sterol 14alpha-demethylase catalyzes the three-step oxidative removal of the 14alpha-methyl group (C-32) of both these sterols in the form of formate, and converts eburicol and lanosterol to 14-demethyleburicol (4,4,24-trimethylergosta-8,14,24(28)-trienol) and 4,4-dimethyl-5alpha-cholesta-8,14,24-trien-3beta-ol, respectively, which are further metabolized by other enzymes in the pathway to ergosterol. Can also use substrates not intrinsic to fungi, such as 24,25-dihydrolanosterol (DHL), producing 4,4-dimethyl-8,14-cholestadien-3-beta-ol, but at lower rates than the endogenous substrates. In Mycosarcoma maydis (Corn smut fungus), this protein is Lanosterol 14-alpha demethylase (ERG11).